Here is a 144-residue protein sequence, read N- to C-terminus: Transcription antitermination protein NusB (144 aa).

The protein belongs to the NusB family.

Its function is as follows. Involved in transcription antitermination. Required for transcription of ribosomal RNA (rRNA) genes. Binds specifically to the boxA antiterminator sequence of the ribosomal RNA (rrn) operons. The chain is Transcription antitermination protein NusB from Streptomyces avermitilis (strain ATCC 31267 / DSM 46492 / JCM 5070 / NBRC 14893 / NCIMB 12804 / NRRL 8165 / MA-4680).